Reading from the N-terminus, the 579-residue chain is Small conductance calcium-activated potassium channel protein 2 (579 aa).

2 disordered regions span residues 1–54 (MSSC…AAAA) and 90–115 (TGGGGGGGGSGHGSSSGTKSSKKKNQ). The segment covering 90-103 (TGGGGGGGGSGHGS) has biased composition (gly residues). Residues 138–158 (ALIFGMFGIVVMVIETELSWG) form a helical membrane-spanning segment. Residue Y160 is modified to Phosphotyrosine. Residues 168 to 188 (LALKCLISLSTIILLGLIIVY) form a helical membrane-spanning segment. A helical transmembrane segment spans residues 214-234 (IFFICLEILVCAIHPIPGNYT). Residues 256 to 276 (IILSIPMFLRLYLIARVMLLH) traverse the membrane as a helical segment. The chain crosses the membrane as a helical span at residues 305–325 (LMTICPGTVLLVFSISLWIIA). Positions 345 to 365 (FLGAMWLISITFLSIGYGDMV) form an intramembrane region, pore-forming. Residues 374 to 394 (VCLLTGIMGAGCTALVVAVVA) traverse the membrane as a helical segment. A calmodulin-binding region spans residues 412 to 488 (DTQLTKRVKN…LVDLAKTQNI (77 aa)). The segment at 551–579 (VTYNAERSRSSSRRRRSSSTAPPTSSESS) is disordered. Residues 568-579 (SSTAPPTSSESS) show a composition bias toward low complexity.

This sequence belongs to the potassium channel KCNN family. KCa2.2/KCNN2 subfamily. In terms of assembly, homodimer. Heteromultimer with KCNN1 and KCNN3. The complex is composed of 4 channel subunits each of which binds to a calmodulin subunit which regulates the channel activity through calcium-binding. Interacts (via N-terminal domain) with MPP2. As to expression, expressed in atrial myocytes (at protein level). Widely expressed.

It localises to the membrane. The protein localises to the cytoplasm. Its subcellular location is the myofibril. The protein resides in the sarcomere. It is found in the z line. The enzyme catalyses K(+)(in) = K(+)(out). Its activity is regulated as follows. Inhibited by bee venom neurotoxin apamin. Inhibited by UCL 1684 and tetraethylammonium (TEA). Its function is as follows. Small conductance calcium-activated potassium channel that mediates the voltage-independent transmembrane transfer of potassium across the cell membrane through a constitutive interaction with calmodulin which binds the intracellular calcium allowing its opening. The current is characterized by a voltage-independent activation, an intracellular calcium concentration increase-dependent activation and a single-channel conductance of about 3 picosiemens. Also presents an inwardly rectifying current, thus reducing its already small outward conductance of potassium ions, which is particularly the case when the membrane potential displays positive values, above + 20 mV. The inward rectification could be due to a blockade of the outward current by intracellular divalent cations such as calcium and magnesium and could also be due to an intrinsic property of the channel pore, independent of intracellular divalent ions. There are three positively charged amino acids in the S6 transmembrane domain, close to the pore, that collectively control the conductance and rectification through an electrostatic mechanism. Additionally, electrostatic contributions from these residues also play an important role in determining the intrinsic open probability of the channel in the absence of calcium, affecting the apparent calcium affinity for activation. Forms an heteromeric complex with calmodulin, which is constitutively associated in a calcium-independent manner. Channel opening is triggered when calcium binds the calmodulin resulting in a rotary movement leading to the formation of the dimeric complex to open the gate. Plays a role in the repolarization phase of cardiac action potential. The polypeptide is Small conductance calcium-activated potassium channel protein 2 (Homo sapiens (Human)).